We begin with the raw amino-acid sequence, 349 residues long: UDP-3-O-acylglucosamine N-acyltransferase (349 aa).

H240 functions as the Proton acceptor in the catalytic mechanism.

It belongs to the transferase hexapeptide repeat family. LpxD subfamily. In terms of assembly, homotrimer.

The catalysed reaction is a UDP-3-O-[(3R)-3-hydroxyacyl]-alpha-D-glucosamine + a (3R)-hydroxyacyl-[ACP] = a UDP-2-N,3-O-bis[(3R)-3-hydroxyacyl]-alpha-D-glucosamine + holo-[ACP] + H(+). It participates in bacterial outer membrane biogenesis; LPS lipid A biosynthesis. In terms of biological role, catalyzes the N-acylation of UDP-3-O-acylglucosamine using 3-hydroxyacyl-ACP as the acyl donor. Is involved in the biosynthesis of lipid A, a phosphorylated glycolipid that anchors the lipopolysaccharide to the outer membrane of the cell. In Porphyromonas gingivalis (strain ATCC 33277 / DSM 20709 / CIP 103683 / JCM 12257 / NCTC 11834 / 2561), this protein is UDP-3-O-acylglucosamine N-acyltransferase.